An 874-amino-acid chain; its full sequence is Alanine--tRNA ligase (874 aa).

Zn(2+) contacts are provided by His-562, His-566, Cys-663, and His-667.

This sequence belongs to the class-II aminoacyl-tRNA synthetase family. Zn(2+) serves as cofactor.

It localises to the cytoplasm. The catalysed reaction is tRNA(Ala) + L-alanine + ATP = L-alanyl-tRNA(Ala) + AMP + diphosphate. Functionally, catalyzes the attachment of alanine to tRNA(Ala) in a two-step reaction: alanine is first activated by ATP to form Ala-AMP and then transferred to the acceptor end of tRNA(Ala). Also edits incorrectly charged Ser-tRNA(Ala) and Gly-tRNA(Ala) via its editing domain. The protein is Alanine--tRNA ligase of Bordetella bronchiseptica (strain ATCC BAA-588 / NCTC 13252 / RB50) (Alcaligenes bronchisepticus).